A 446-amino-acid polypeptide reads, in one-letter code: Cytochrome P450 monooxygenase ptmP (446 aa).

Residues 19 to 39 (VTVIWILMALVLLAYLILPNP) form a helical membrane-spanning segment. C385 provides a ligand contact to heme. A glycan (N-linked (GlcNAc...) asparagine) is linked at N430.

Belongs to the cytochrome P450 family. It depends on heme as a cofactor.

The protein localises to the membrane. It participates in secondary metabolite biosynthesis. Cytochrome P450 monooxygenase; part of the gene cluster that mediates the biosynthesis of the indole diterpenes penitrems. The geranylgeranyl diphosphate (GGPP) synthase ptmG catalyzes the first step in penitrem biosynthesis via conversion of farnesyl pyrophosphate and isopentyl pyrophosphate into geranylgeranyl pyrophosphate (GGPP). Condensation of indole-3-glycerol phosphate with GGPP by the prenyl transferase ptmC then forms 3-geranylgeranylindole (3-GGI). Epoxidation by the FAD-dependent monooxygenase ptmM leads to a epoxidized-GGI that is substrate of the terpene cyclase ptmB for cyclization to yield paspaline. Paspaline is subsequently converted to 13-desoxypaxilline by the cytochrome P450 monooxygenase ptmP, the latter being then converted to paxilline by the cytochrome P450 monooxygenase ptmQ. Paxilline is converted to beta-paxitriol via C-10 ketoreduction by the short-chain dehydrogenase ptmH which can be monoprenylated at the C-20 by the indole diterpene prenyltransferase ptmD. A two-step elimination (acetylation and elimination) process performed by the O-acetyltransferase ptmV and ptmI leads to the production of the prenylated form of penijanthine. The FAD-linked oxidoreductase ptmO then converts the prenylated form of penijanthine into PC-M5 which is in turn transformed into PC-M4 by the aromatic dimethylallyltransferase ptmE. Five sequential oxidative transformations performed by the cytochrome P450 monooxygenases ptmK, ptmU, ptmL, ptmN and ptmJ yield the various penitrem compounds. PtmK, ptmU and ptmM are involved in the formation of the key bicyclic ring of penitrem C via the formation of the intermediates secopenitrem D and penitrem D. PtmL catalyzes the epoxidation of penitrem D and C to yield penitrem B and F, respectively. PtmJ catalyzes the last benzylic hydroxylation to convert penitrem B to prenitrem E and penitrem F to penitrem A. The chain is Cytochrome P450 monooxygenase ptmP from Penicillium ochrochloron.